The following is a 44-amino-acid chain: Photosystem I reaction center subunit IX (44 aa).

The chain crosses the membrane as a helical span at residues 7–27 (YLSTAPVLATLWFGSLAGLLI).

Belongs to the PsaJ family.

The protein resides in the plastid. It localises to the chloroplast thylakoid membrane. Its function is as follows. May help in the organization of the PsaE and PsaF subunits. This is Photosystem I reaction center subunit IX from Calycanthus floridus var. glaucus (Eastern sweetshrub).